The sequence spans 131 residues: Profilin (131 aa).

Belongs to the profilin family. As to quaternary structure, occurs in many kinds of cells as a complex with monomeric actin in a 1:1 ratio.

It localises to the cytoplasm. The protein localises to the cytoskeleton. Functionally, binds to actin and affects the structure of the cytoskeleton. At high concentrations, profilin prevents the polymerization of actin, whereas it enhances it at low concentrations. By binding to PIP2, it inhibits the formation of IP3 and DG. This is Profilin from Fragaria ananassa (Strawberry).